The sequence spans 90 residues: Small ribosomal subunit protein bS16 (90 aa).

This sequence belongs to the bacterial ribosomal protein bS16 family.

This Lactobacillus gasseri (strain ATCC 33323 / DSM 20243 / BCRC 14619 / CIP 102991 / JCM 1131 / KCTC 3163 / NCIMB 11718 / NCTC 13722 / AM63) protein is Small ribosomal subunit protein bS16.